A 482-amino-acid chain; its full sequence is Putative L-cysteine desulfhydrase 1 (482 aa).

A compositionally biased stretch (acidic residues) spans Met-1–Ala-10. Positions Met-1–Ser-45 are disordered. Positions Ala-11–Gly-22 are enriched in low complexity. The residue at position 276 (Lys-276) is an N6-(pyridoxal phosphate)lysine.

It belongs to the class-V pyridoxal-phosphate-dependent aminotransferase family. Pyridoxal 5'-phosphate serves as cofactor.

It carries out the reaction L-cysteine + H2O = hydrogen sulfide + pyruvate + NH4(+) + H(+). Catalyzes the production of hydrogen sulfide (H2S) from cysteine. The protein is Putative L-cysteine desulfhydrase 1 of Oryza sativa subsp. japonica (Rice).